The chain runs to 173 residues: Probable xanthine dehydrogenase subunit E (173 aa).

Residues 14–90 enclose the 2Fe-2S ferredoxin-type domain; that stretch reads EQFRMTVNGQ…GHSITTIEGL (77 aa). Positions 52, 57, 60, 72, 110, 113, 145, and 147 each coordinate [2Fe-2S] cluster.

As to quaternary structure, could be composed of four subunits: PucA, PucC, PucD and PucE. Requires [2Fe-2S] cluster as cofactor.

The enzyme catalyses xanthine + NAD(+) + H2O = urate + NADH + H(+). It carries out the reaction hypoxanthine + NAD(+) + H2O = xanthine + NADH + H(+). It functions in the pathway purine metabolism; hypoxanthine degradation; urate from hypoxanthine: step 1/2. The protein operates within purine metabolism; hypoxanthine degradation; urate from hypoxanthine: step 2/2. Functionally, oxidizes hypoxanthine and xanthine to uric acid. In Bacillus subtilis (strain 168), this protein is Probable xanthine dehydrogenase subunit E (pucE).